We begin with the raw amino-acid sequence, 376 residues long: PCM7-4 (376 aa).

In terms of biological role, has antibacterial activity against Listeria monocytogenes. This chain is PCM7-4, found in Bacillus velezensis.